The chain runs to 338 residues: Heme-dependent oxidative N-demethylase alpha subunit (338 aa).

Heme b contacts are provided by Y38 and H194. The active-site Proton donor is the R224. Position 226 (N226) interacts with heme b. E266 lines the dimethylamine pocket. Heme b contacts are provided by Y317 and K318.

In terms of assembly, the heme-dependent oxidative N-demethylase (HODM) is a heterotetramer composed of a catalytic alpha subunit, a FMN/2Fe-2S-dependent oxidoreductase beta subunit, a gamma subunit with putative aminotransferase activity, and a delta subunit of unknown function.

It carries out the reaction dimethylamine + NADPH + O2 + H(+) = methylamine + formaldehyde + NADP(+) + H2O. In terms of biological role, component of the heme-dependent oxidative N-demethylase (HODM) enzyme, that catalyzes the NADPH-dependent oxidation of dimethylamine (DMA) to methylamine (MA) and formaldehyde. Functions in bacterial methylated amine catabolism, linking alkylamine oxidation to the tetrahydrofolate C1 pool. The alpha subunit of HODM binds heme, oxygen and DMA, and serves as the site of the oxidative N-demethylase activity. This chain is Heme-dependent oxidative N-demethylase alpha subunit, found in Ectopseudomonas mendocina (strain ymp) (Pseudomonas mendocina).